Here is a 100-residue protein sequence, read N- to C-terminus: Small ribosomal subunit protein uS14c (100 aa).

Belongs to the universal ribosomal protein uS14 family. Part of the 30S ribosomal subunit.

The protein localises to the plastid. It is found in the chloroplast. In terms of biological role, binds 16S rRNA, required for the assembly of 30S particles. The protein is Small ribosomal subunit protein uS14c of Euglena gracilis.